The chain runs to 332 residues: L-lactate dehydrogenase A chain (332 aa).

Residues 29 to 57 and R99 each bind NAD(+); that span reads GAVG…IEDK. Substrate is bound by residues R106, N138, and R169. NAD(+) is bound at residue N138. H193 acts as the Proton acceptor in catalysis. T248 serves as a coordination point for substrate.

It belongs to the LDH/MDH superfamily. LDH family. In terms of assembly, homotetramer.

Its subcellular location is the cytoplasm. It catalyses the reaction (S)-lactate + NAD(+) = pyruvate + NADH + H(+). Its pathway is fermentation; pyruvate fermentation to lactate; (S)-lactate from pyruvate: step 1/1. Functionally, interconverts simultaneously and stereospecifically pyruvate and lactate with concomitant interconversion of NADH and NAD(+). The chain is L-lactate dehydrogenase A chain (LDHA) from Sceloporus woodi (Florida scrub lizard).